The following is a 112-amino-acid chain: Putative pterin-4-alpha-carbinolamine dehydratase (112 aa).

Belongs to the pterin-4-alpha-carbinolamine dehydratase family.

It catalyses the reaction (4aS,6R)-4a-hydroxy-L-erythro-5,6,7,8-tetrahydrobiopterin = (6R)-L-erythro-6,7-dihydrobiopterin + H2O. This Shewanella sp. (strain ANA-3) protein is Putative pterin-4-alpha-carbinolamine dehydratase.